A 303-amino-acid chain; its full sequence is Ribosomal protein L11 methyltransferase (303 aa).

Residues Thr-144, Gly-165, Asp-187, and Asn-235 each coordinate S-adenosyl-L-methionine.

It belongs to the methyltransferase superfamily. PrmA family.

It is found in the cytoplasm. It catalyses the reaction L-lysyl-[protein] + 3 S-adenosyl-L-methionine = N(6),N(6),N(6)-trimethyl-L-lysyl-[protein] + 3 S-adenosyl-L-homocysteine + 3 H(+). In terms of biological role, methylates ribosomal protein L11. The polypeptide is Ribosomal protein L11 methyltransferase (Prochlorococcus marinus (strain MIT 9301)).